A 247-amino-acid polypeptide reads, in one-letter code: Type III pantothenate kinase (247 aa).

6–13 is a binding site for ATP; sequence DVGNTHTT. 101–104 is a binding site for substrate; the sequence is GADR. Aspartate 103 serves as the catalytic Proton acceptor. K(+) is bound at residue aspartate 123. ATP is bound at residue threonine 126. Threonine 177 lines the substrate pocket.

Belongs to the type III pantothenate kinase family. As to quaternary structure, homodimer. It depends on NH4(+) as a cofactor. The cofactor is K(+).

The protein resides in the cytoplasm. The enzyme catalyses (R)-pantothenate + ATP = (R)-4'-phosphopantothenate + ADP + H(+). Its pathway is cofactor biosynthesis; coenzyme A biosynthesis; CoA from (R)-pantothenate: step 1/5. In terms of biological role, catalyzes the phosphorylation of pantothenate (Pan), the first step in CoA biosynthesis. This chain is Type III pantothenate kinase, found in Thermosipho melanesiensis (strain DSM 12029 / CIP 104789 / BI429).